A 775-amino-acid chain; its full sequence is MSKSKSSESVKVVVRCRPMNEKERVANFNRVVSVDVKLGQVAVCNPRGASSHEHPKVFTFDSVYDWNSKQMELYDETFRPLVDSVLFGFNGTIFAYGQTGTGKTYTMEGVRNDPERRGVIPNSFEHIFTHISRSQNQQYLVRASYLEIYQEEIRDLLSKDQARRLELKERPDTGVYVKDLSSFVTKSVREIEHVMNVGNQNRSVGATNMNEHSSRSHAIFVITIECSELGPDGENHIRVGKLNLVDLAGSERQTKTGAQGERLKEATKINLSLSALGNVISALVDGRSTHIPYRDSKLTRLLQDSLGGNARTVMVANIGPASYNVEETLTTLRYANRAKNIKNKPRVNEDPKDALLREFQEEIARLKEQLEKRSGRKRRRRRRRRVGEGGEEFEDGEDEEDDDDDDEDEEEGVDADKNIADYWHEQQEKLEKERRAIMEDHSLVAEEKQRLLKEKERKMTDLHKEKEASEMLTAKVKAMESKLLVGGKNIVDHTNEQQKVLELKRQEIAEQKRREREMKQEMECRDEETLELKETYSSLQQEVDIKTKKLKKLFSKLQSVKSEIQDAQDEHVKYRQELEQTQNELTRELKLKHLIIENFIPMEEKNKIVTRATFDEEDDLWKMTPITRIQNSDHQMMKRPVSAVGYRRPLSQHARMAMLMRPDVRYKAENILLLELDLPSRTTKDYEGPVIAPKVAAALEDALREEDEIQVDASGFHASLGSSPGLSASAAGFSKKPKSGRPKTGKKVSTPTSAHSPLSGSGSPLYPQSRGLVPK.

Residues S9–I341 form the Kinesin motor domain. G97–T104 provides a ligand contact to ATP. Residues K372 to I419 form a disordered region. The span at S374 to R385 shows a compositional bias: basic residues. The segment covering G389–V413 has biased composition (acidic residues). The stretch at L501–L591 forms a coiled coil. The interval F716–K775 is disordered. Low complexity predominate over residues A718–S734. The segment covering K735–K746 has biased composition (basic residues). A compositionally biased stretch (low complexity) spans S756 to L765.

It belongs to the TRAFAC class myosin-kinesin ATPase superfamily. Kinesin family. In terms of assembly, heterodimer of KIF3A and KIF3B. KIF3A/KIF3B heterodimer interacts with KIFAP3 forming a heterotrimeric (KIF3A/KIF3B/KIFAP3) complex.

The protein localises to the cytoplasm. Its subcellular location is the cytoskeleton. It is found in the cell projection. It localises to the cilium. The protein resides in the dendritic spine. Microtubule-based molecular motor that transport intracellular cargos, such as vesicles, organelles and protein complexes. Uses ATP hydrolysis to generate force to bind and move along the microtubule. Plays a role in cilia formation. Required for photoreceptor development. The sequence is that of Kinesin-like protein KIF3B from Danio rerio (Zebrafish).